A 149-amino-acid polypeptide reads, in one-letter code: MRVILQKDVINLGDAGDLREVADGYARNFLFPKRLAVRANEGNTKAAFHQKKLGELKKEKRKKAMEAVATNLNGKEYDILVKTGGGEKLFGAVTPIDVASILKKNGFELDKRKIEIAEPIRNLGSYKIKIRLAEGIQPVITLHVKKEEE.

It belongs to the bacterial ribosomal protein bL9 family.

Functionally, binds to the 23S rRNA. The polypeptide is Large ribosomal subunit protein bL9 (Leptospira borgpetersenii serovar Hardjo-bovis (strain JB197)).